The sequence spans 264 residues: Hemin import ATP-binding protein HmuV (264 aa).

Residues 2–241 (IEVSGVSVRL…ETMLAVFGCA (240 aa)) form the ABC transporter domain. 34-41 (GPNGSGKT) lines the ATP pocket.

Belongs to the ABC transporter superfamily. Heme (hemin) importer (TC 3.A.1.14.5) family. As to quaternary structure, the complex is composed of two ATP-binding proteins (HmuV), two transmembrane proteins (HmuU) and a solute-binding protein (HmuT).

The protein localises to the cell inner membrane. Its function is as follows. Part of the ABC transporter complex HmuTUV involved in hemin import. Responsible for energy coupling to the transport system. In Rhizobium johnstonii (strain DSM 114642 / LMG 32736 / 3841) (Rhizobium leguminosarum bv. viciae), this protein is Hemin import ATP-binding protein HmuV.